The primary structure comprises 21 residues: Trypsin (21 aa).

A propeptide spans 1-7 (FPIEEDK) (activation peptide). The Peptidase S1 domain occupies 8-21 (IVGGYECPKHXVPW).

This sequence belongs to the peptidase S1 family.

The protein resides in the secreted. It localises to the extracellular space. The enzyme catalyses Preferential cleavage: Arg-|-Xaa, Lys-|-Xaa.. The polypeptide is Trypsin (Protopterus aethiopicus (Marbled lungfish)).